We begin with the raw amino-acid sequence, 495 residues long: MELSLSTLFDSEILSDLTIEFVDNHTKSKVHFHKNILYLGCSYFRSMFNRFSESNSREIVIKVPDVNASIDIIKYFYGIETTNDYWKYVLNTYVCKKFFGLETEFPANITVVSDDIEEFLDFIDKMGYDDNTLKLIAKNIPESYNLQTFPKYFIKTLFRVLDTKYLILVFGHEIILVDINGTTYKSIKFDTSIKGACHIQNTNKIAYRTDNIIRVYDFEENKIVFEKKNSYTHRICSANGKLFIGDNSRVEEINPINGESYRFFRSTYDEKIILEVFYDNEFIIVFGQPHVHSLRIKTLICFYDMKMGGKIRSFYYDGNVDMLEYCPVNKCMFFCENHKKTGKIYRVCFYDSSIKIFTRKELVYESKYSKIIKIIWISTKCSLIFCCENGTIGTYCIMTNETKILTDINDKIKDAVLIKHNILAILSPNTVHIIDINKCGDNANINKFNVSSDIVKIMSTSSINTKLANKISDLLDDIDDESDDDSDDDIITTKN.

A BTB domain is found at 15-85 (SDLTIEFVDN…FYGIETTNDY (71 aa)).

Belongs to the mimivirus BTB/WD family.

The polypeptide is Putative BTB/POZ domain-containing protein L98 (Acanthamoeba polyphaga (Amoeba)).